The chain runs to 116 residues: Hydrogenase maturation factor HypA (116 aa).

His-2 contributes to the Ni(2+) binding site. Zn(2+) is bound by residues Cys-73, Cys-76, Cys-90, and Cys-93.

This sequence belongs to the HypA/HybF family.

Functionally, involved in the maturation of [NiFe] hydrogenases. Required for nickel insertion into the metal center of the hydrogenase. The protein is Hydrogenase maturation factor HypA of Escherichia coli O6:H1 (strain CFT073 / ATCC 700928 / UPEC).